Consider the following 519-residue polypeptide: MGYFWFPWFSAIFVAVFSYYIWQWTFWRRRGVVGPMGFPVLGVFLNSLDNNFPFPLQCREWTKKFGKIYGFTEGTLKTLVISDPELVHEVFVTQYDNFYGRKRNPIQGDSEKEKRTNLFAAQGFRWKRLRAISSPTFSNSSLRKLYQTVEDSALELLRHIEKQSAGGKQIDMLKFYQEFTLDVIGRIAMGQTDSQMFKNPIMPIVSKLFQGNFAKLFLIGGIFPTFLVEIIRQILLKNLKVGSFRKINEITLDAIHNRIKQREEDQKNGIEIGEPADFIDLFLDAKAEDVEHFGENNGDFSKSTTYTNRQLTTEEIVGQCTVFLIAGFDTTALSLSYATYLLATHPEIQKKLQEEVNRECPNPEVTIDQLSKLKYMECVFKEALRLYPLGAFANSRRCMRNTKLGNMKVEVGTMIQVDTWTLHTDPNIWGDDAEDFKPERWQTPNSDQIYQKSGYIPFGLGPRQCIGMRLAYMEEKILLVHILRKFTFETGAKTEIPLKLIGRATTQPESVWMHLNPRN.

Position 465 (C465) interacts with heme.

The protein belongs to the cytochrome P450 family. Heme is required as a cofactor.

In terms of biological role, cytochromes P450 are a group of heme-thiolate monooxygenases. They oxidize a variety of structurally unrelated compounds, including steroids, fatty acids, and xenobiotics. The polypeptide is Putative cytochrome P450 CYP13A1 (cyp-13A1) (Caenorhabditis elegans).